Consider the following 276-residue polypeptide: Small ribosomal subunit protein uS5w (276 aa).

Residues 1 to 15 (MAERGVERGGDRGDF) show a composition bias toward basic and acidic residues. The tract at residues 1–42 (MAERGVERGGDRGDFGRGFGGRGGGRGGPRGRGRRAGRAPEE) is disordered. Residues 16-28 (GRGFGGRGGGRGG) are compositionally biased toward gly residues. The S5 DRBM domain occupies 87–150 (LKDEVMKIMP…ILAKLSVVPI (64 aa)).

The protein belongs to the universal ribosomal protein uS5 family.

This is Small ribosomal subunit protein uS5w (RPS2D) from Arabidopsis thaliana (Mouse-ear cress).